Consider the following 325-residue polypeptide: GMP reductase (325 aa).

Residue Cys174 is the Thioimidate intermediate of the active site. NADP(+) is bound at residue 203–226; sequence IVADGGIRNNGDIAKSIRFGASMC.

This sequence belongs to the IMPDH/GMPR family. GuaC type 2 subfamily.

The enzyme catalyses IMP + NH4(+) + NADP(+) = GMP + NADPH + 2 H(+). Its function is as follows. Catalyzes the irreversible NADPH-dependent deamination of GMP to IMP. It functions in the conversion of nucleobase, nucleoside and nucleotide derivatives of G to A nucleotides, and in maintaining the intracellular balance of A and G nucleotides. The polypeptide is GMP reductase (Ligilactobacillus salivarius (strain UCC118) (Lactobacillus salivarius)).